Here is a 151-residue protein sequence, read N- to C-terminus: Cytochrome c-type biogenesis protein CcmE 2 (151 aa).

Over 1 to 8 (MNPLRKKR) the chain is Cytoplasmic. A helical; Signal-anchor for type II membrane protein transmembrane segment spans residues 9–29 (LVIILAILVGVGAAVGLALSA). Topologically, residues 30 to 151 (LQQNINLFYT…QSAPAPGKEG (122 aa)) are periplasmic. 2 residues coordinate heme: H124 and Y128.

It belongs to the CcmE/CycJ family.

The protein resides in the cell inner membrane. Heme chaperone required for the biogenesis of c-type cytochromes. Transiently binds heme delivered by CcmC and transfers the heme to apo-cytochromes in a process facilitated by CcmF and CcmH. The chain is Cytochrome c-type biogenesis protein CcmE 2 from Pseudomonas fluorescens (strain Pf0-1).